Here is a 459-residue protein sequence, read N- to C-terminus: Nucleobindin-1 (459 aa).

The N-terminal stretch at 1–25 (MPTSVPRGAPFLLLPPLLMLSAVLA) is a signal peptide. S85 is subject to Phosphoserine. Position 147 is a phosphothreonine (T147). A coiled-coil region spans residues 149-217 (EARDLELLIQ…QQRRHREHPK (69 aa)). A DNA-binding region spans residues 171–217 (HHEEFKRYEMLKEHERRRYLESLGEEQRKEAERKLQEQQRRHREHPK). The span at 192 to 209 (SLGEEQRKEAERKLQEQQ) shows a compositional bias: basic and acidic residues. Residues 192 to 220 (SLGEEQRKEAERKLQEQQRRHREHPKVNV) form a disordered region. Residues 227-320 (LKEVWEELDG…VTLEEFLAST (94 aa)) are binds to GNAI2 and GNAI3. EF-hand domains follow at residues 239–274 (PNRF…ELEK) and 291–326 (ERLR…KEFG). Residues D252, N254, D256, E263, D304, N306, D308, and E315 each contribute to the Ca(2+) site. A GBA motif is present at residues 302–332 (NVDTNQDRLVTLEEFLASTQRKEFGETAEGW). Residues 340–407 (AYTEEELKRF…RKQQQQEQSA (68 aa)) are a coiled coil. S368 is modified (phosphoserine). A disordered region spans residues 393 to 459 (LQMEQRKQQQ…VLPQLDSQHL (67 aa)). Residues 433–445 (DQKDVPASEKKVP) show a composition bias toward basic and acidic residues. S456 is modified (phosphoserine).

The protein belongs to the nucleobindin family. Interacts (via GBA motif) with guanine nucleotide-binding protein G(i) alpha subunits GNAI1, GNAI2 and GNAI3 with higher affinity for GNAI1 and GNAI3 than for GNAI2. Preferentially interacts with inactive rather than active GNAI3. Interaction with GNAI3 is inhibited when NUCB1 binds calcium, probably due to a conformational change which renders the GBA motif inaccessible. In terms of tissue distribution, minor constituent of the mineralized matrix of bone. Detected in calvaria, rib cartilage, liver, kidney, spleen, brain, lung, skeletal and heart muscle with highest expression in calvaria and approximately half the amount in kidney, liver and brain.

It localises to the golgi apparatus. Its subcellular location is the cis-Golgi network membrane. It is found in the cytoplasm. The protein resides in the secreted. Its function is as follows. Major calcium-binding protein of the Golgi which may have a role in calcium homeostasis. Acts as a non-receptor guanine nucleotide exchange factor which binds to and activates alpha subunits of guanine nucleotide-binding proteins (G proteins). This is Nucleobindin-1 (Nucb1) from Rattus norvegicus (Rat).